Consider the following 259-residue polypeptide: ATP synthase subunit b 2 (259 aa).

A helical transmembrane segment spans residues 5–27; the sequence is WFTVSAQAINFLILVALLKRFLY.

This sequence belongs to the ATPase B chain family. In terms of assembly, F-type ATPases have 2 components, F(1) - the catalytic core - and F(0) - the membrane proton channel. F(1) has five subunits: alpha(3), beta(3), gamma(1), delta(1), epsilon(1). F(0) has three main subunits: a(1), b(2) and c(10-14). The alpha and beta chains form an alternating ring which encloses part of the gamma chain. F(1) is attached to F(0) by a central stalk formed by the gamma and epsilon chains, while a peripheral stalk is formed by the delta and b chains.

Its subcellular location is the cell inner membrane. Its function is as follows. F(1)F(0) ATP synthase produces ATP from ADP in the presence of a proton or sodium gradient. F-type ATPases consist of two structural domains, F(1) containing the extramembraneous catalytic core and F(0) containing the membrane proton channel, linked together by a central stalk and a peripheral stalk. During catalysis, ATP synthesis in the catalytic domain of F(1) is coupled via a rotary mechanism of the central stalk subunits to proton translocation. Functionally, component of the F(0) channel, it forms part of the peripheral stalk, linking F(1) to F(0). This chain is ATP synthase subunit b 2, found in Syntrophotalea carbinolica (strain DSM 2380 / NBRC 103641 / GraBd1) (Pelobacter carbinolicus).